Here is a 212-residue protein sequence, read N- to C-terminus: Thymidylate kinase (212 aa).

9-16 (GIDGCGKT) serves as a coordination point for ATP.

It belongs to the thymidylate kinase family.

It catalyses the reaction dTMP + ATP = dTDP + ADP. In terms of biological role, phosphorylation of dTMP to form dTDP in both de novo and salvage pathways of dTTP synthesis. This Synechococcus sp. (strain CC9311) protein is Thymidylate kinase.